The chain runs to 486 residues: Betaine aldehyde dehydrogenase (486 aa).

Residues threonine 23 and aspartate 90 each coordinate K(+). 147-149 (GAW) lines the NAD(+) pocket. Lysine 159 (charge relay system) is an active-site residue. NAD(+)-binding positions include 173-176 (KPSE) and 226-229 (ESGT). Leucine 241 lines the K(+) pocket. The active-site Proton acceptor is glutamate 247. Positions 249, 281, and 382 each coordinate NAD(+). Cysteine 281 (nucleophile) is an active-site residue. Residue cysteine 281 is modified to Cysteine sulfenic acid (-SOH). Lysine 452 and glycine 455 together coordinate K(+). Glutamate 459 acts as the Charge relay system in catalysis.

This sequence belongs to the aldehyde dehydrogenase family. In terms of assembly, dimer of dimers. It depends on K(+) as a cofactor.

The catalysed reaction is betaine aldehyde + NAD(+) + H2O = glycine betaine + NADH + 2 H(+). The protein operates within amine and polyamine biosynthesis; betaine biosynthesis via choline pathway; betaine from betaine aldehyde: step 1/1. In terms of biological role, involved in the biosynthesis of the osmoprotectant glycine betaine. Catalyzes the irreversible oxidation of betaine aldehyde to the corresponding acid. The protein is Betaine aldehyde dehydrogenase of Vibrio campbellii (strain ATCC BAA-1116).